A 102-amino-acid polypeptide reads, in one-letter code: ATP-dependent Clp protease adapter protein ClpS (102 aa).

Belongs to the ClpS family. As to quaternary structure, binds to the N-terminal domain of the chaperone ClpA.

Functionally, involved in the modulation of the specificity of the ClpAP-mediated ATP-dependent protein degradation. The polypeptide is ATP-dependent Clp protease adapter protein ClpS (Janthinobacterium sp. (strain Marseille) (Minibacterium massiliensis)).